The sequence spans 393 residues: Formate-dependent phosphoribosylglycinamide formyltransferase (393 aa).

N(1)-(5-phospho-beta-D-ribosyl)glycinamide contacts are provided by residues 22–23 (EL) and glutamate 82. ATP is bound by residues arginine 114, lysine 155, 160-165 (SSGKGQ), 195-198 (EGFI), and glutamate 203. An ATP-grasp domain is found at 119–308 (RLAAEELKLP…QFALHARAIL (190 aa)). Mg(2+) contacts are provided by glutamate 267 and glutamate 279. N(1)-(5-phospho-beta-D-ribosyl)glycinamide is bound by residues aspartate 286, lysine 356, and 363-364 (RR).

It belongs to the PurK/PurT family. As to quaternary structure, homodimer.

It catalyses the reaction N(1)-(5-phospho-beta-D-ribosyl)glycinamide + formate + ATP = N(2)-formyl-N(1)-(5-phospho-beta-D-ribosyl)glycinamide + ADP + phosphate + H(+). It participates in purine metabolism; IMP biosynthesis via de novo pathway; N(2)-formyl-N(1)-(5-phospho-D-ribosyl)glycinamide from N(1)-(5-phospho-D-ribosyl)glycinamide (formate route): step 1/1. Involved in the de novo purine biosynthesis. Catalyzes the transfer of formate to 5-phospho-ribosyl-glycinamide (GAR), producing 5-phospho-ribosyl-N-formylglycinamide (FGAR). Formate is provided by PurU via hydrolysis of 10-formyl-tetrahydrofolate. The polypeptide is Formate-dependent phosphoribosylglycinamide formyltransferase (Pseudomonas syringae pv. tomato (strain ATCC BAA-871 / DC3000)).